A 185-amino-acid polypeptide reads, in one-letter code: Transcription termination/antitermination protein NusG (185 aa).

The KOW domain occupies 134 to 164; it reads VGKRVRIVDGAFSGFEAPITEINGDKLTLTV.

It belongs to the NusG family.

Participates in transcription elongation, termination and antitermination. The protein is Transcription termination/antitermination protein NusG of Lactococcus lactis subsp. lactis (strain IL1403) (Streptococcus lactis).